The following is a 106-amino-acid chain: uncharacterized protein (106 aa).

2 consecutive transmembrane segments (helical) span residues 10–30 (VYIQMVAFSPYRIVLPFVAFV) and 65–85 (LDFASAFVVPAASFVESLLAY).

Its subcellular location is the membrane. This is an uncharacterized protein from Saccharomyces cerevisiae (strain ATCC 204508 / S288c) (Baker's yeast).